A 139-amino-acid polypeptide reads, in one-letter code: Short neuropeptide F (139 aa).

A propeptide spanning residues 1–23 is cleaved from the precursor; the sequence is MGRARRTVRAPAQHDALGGHALA. The tract at residues 1-48 is disordered; sequence MGRARRTVRAPAQHDALGGHALARKSVRSPSRRLRFGRRSDPDMPPQA. A compositionally biased stretch (basic residues) spans 22–37; that stretch reads LARKSVRSPSRRLRFG. Phenylalanine amide is present on Phe36. The propeptide occupies 40 to 62; the sequence is SDPDMPPQAPLDEMNELLSLREV. At Phe70 the chain carries Phenylalanine amide. A propeptide spanning residues 74–96 is cleaved from the precursor; the sequence is SEERAVPHIFPQEFLTQEQDRAV. A Phenylalanine amide modification is found at Phe105. The propeptide occupies 109–139; that stretch reads SDNNMFLLPYESALPQEVKANGSVEDDRQQE.

This sequence belongs to the NPY family. SNPF peptide 1: Expressed in corpora cardiaca (CC), corpora allata (CA), antennal lobe (AL) and gnathal ganglion (GNG) (at protein level). Expression in AL detected in all animals, in GNG in most animals, expression in CC and CA in some animals (at protein level). sNPF peptide 2: Expressed in corpora cardiaca (CC), corpora allata (CA), antennal lobe (AL) and gnathal ganglion (GNG) (at protein level). Expression in AL detected in all animals, in GNG, CC and CA in most animals (at protein level). sNPF peptide 3: Expressed in corpora cardiaca (CC), corpora allata (CA), antennal lobe (AL) and gnathal ganglion (GNG) (at protein level). Expression detected in all animals (at protein level).

Its subcellular location is the secreted. In terms of biological role, plays a role in controlling food intake and regulating body size. The polypeptide is Short neuropeptide F (Agrotis ipsilon (Black cutworm moth)).